A 394-amino-acid polypeptide reads, in one-letter code: Ornithine aminotransferase 1 (394 aa).

Lysine 252 bears the N6-(pyridoxal phosphate)lysine mark.

Belongs to the class-III pyridoxal-phosphate-dependent aminotransferase family. OAT subfamily. The cofactor is pyridoxal 5'-phosphate.

The protein resides in the cytoplasm. The enzyme catalyses a 2-oxocarboxylate + L-ornithine = L-glutamate 5-semialdehyde + an L-alpha-amino acid. The protein operates within amino-acid biosynthesis; L-proline biosynthesis; L-glutamate 5-semialdehyde from L-ornithine: step 1/1. Catalyzes the interconversion of ornithine to glutamate semialdehyde. In Staphylococcus aureus (strain Mu50 / ATCC 700699), this protein is Ornithine aminotransferase 1.